The sequence spans 501 residues: ATP synthase subunit alpha (501 aa).

170–177 (GDRQTGKS) provides a ligand contact to ATP.

It belongs to the ATPase alpha/beta chains family. In terms of assembly, F-type ATPases have 2 components, CF(1) - the catalytic core - and CF(0) - the membrane proton channel. CF(1) has five subunits: alpha(3), beta(3), gamma(1), delta(1), epsilon(1). CF(0) has three main subunits: a(1), b(2) and c(9-12). The alpha and beta chains form an alternating ring which encloses part of the gamma chain. CF(1) is attached to CF(0) by a central stalk formed by the gamma and epsilon chains, while a peripheral stalk is formed by the delta and b chains.

Its subcellular location is the cell membrane. It carries out the reaction ATP + H2O + 4 H(+)(in) = ADP + phosphate + 5 H(+)(out). Its function is as follows. Produces ATP from ADP in the presence of a proton gradient across the membrane. The alpha chain is a regulatory subunit. This Acholeplasma laidlawii (strain PG-8A) protein is ATP synthase subunit alpha.